Reading from the N-terminus, the 199-residue chain is Large ribosomal subunit protein bL25 (199 aa).

This sequence belongs to the bacterial ribosomal protein bL25 family. CTC subfamily. As to quaternary structure, part of the 50S ribosomal subunit; part of the 5S rRNA/L5/L18/L25 subcomplex. Contacts the 5S rRNA. Binds to the 5S rRNA independently of L5 and L18.

This is one of the proteins that binds to the 5S RNA in the ribosome where it forms part of the central protuberance. The chain is Large ribosomal subunit protein bL25 from Herpetosiphon aurantiacus (strain ATCC 23779 / DSM 785 / 114-95).